Consider the following 169-residue polypeptide: Putative phosphoesterase SE_0715 (169 aa).

The active-site Proton donor is His34. 2 consecutive short sequence motifs (HXTX) follow at residues 34-37 and 115-118; these read HITI and HFTI. Residue His115 is the Proton acceptor of the active site.

It belongs to the 2H phosphoesterase superfamily. YjcG family.

This Staphylococcus epidermidis (strain ATCC 12228 / FDA PCI 1200) protein is Putative phosphoesterase SE_0715.